A 102-amino-acid chain; its full sequence is MAPHLLWCPTNGLGLGGSPAGQWGGGSHYRGLVPGEPAGRPPALPLPGLAGLHDHTQLLRMAGQPWLAWGTAAARVSARPTRDCSCTSRCHHACDVVAVTLS.

In terms of tissue distribution, ubiquitous.

In Homo sapiens (Human), this protein is Putative peripheral benzodiazepine receptor-related protein (TSPO).